We begin with the raw amino-acid sequence, 134 residues long: Antifungal protein ginkbilobin-2 (134 aa).

A signal peptide spans 1–26 (MKTMRMNSAFILAFALAAAMLILTEA). One can recognise a Gnk2-homologous domain in the interval 29-134 (TAFVSSACNT…CFIQYEQRSF (106 aa)). 3 disulfide bridges follow: Cys-36-Cys-112, Cys-88-Cys-97, and Cys-100-Cys-125. Residue Asn-37 coordinates alpha-D-mannopyranose. Arg-119 and Glu-130 together coordinate alpha-D-mannopyranose.

As to quaternary structure, binds actin in vitro.

It is found in the secreted. Possesses antifungal activity against F.oxysporum, T.reesei and C.albicans. Weakly inhibits the aspartic acid protease pepsin activity. Exerts antifungal activity against S.cerevisiae and F.culmorum through its carbohydrate-binding specificity. Acts as a lectin that stricly recognizes alpha-1,2-linked mannose moieties and interacts with the yeast cell wall mannan polysaccharide. Can interfere with the fungal actin remodeling resulting to the activation of an actin-dependent cell death. The chain is Antifungal protein ginkbilobin-2 from Ginkgo biloba (Ginkgo).